A 406-amino-acid polypeptide reads, in one-letter code: Cysteine desulfurase (406 aa).

Residue Lys-226 is modified to N6-(pyridoxal phosphate)lysine. The active-site Cysteine persulfide intermediate is Cys-364.

It belongs to the class-V pyridoxal-phosphate-dependent aminotransferase family. Csd subfamily. Homodimer. Interacts with SufE and the SufBCD complex composed of SufB, SufC and SufD. The interaction with SufE is required to mediate the direct transfer of the sulfur atom from the S-sulfanylcysteine. Pyridoxal 5'-phosphate serves as cofactor.

The protein resides in the cytoplasm. The catalysed reaction is (sulfur carrier)-H + L-cysteine = (sulfur carrier)-SH + L-alanine. It catalyses the reaction L-selenocysteine + AH2 = hydrogenselenide + L-alanine + A + H(+). The protein operates within cofactor biosynthesis; iron-sulfur cluster biosynthesis. Its function is as follows. Cysteine desulfurases mobilize the sulfur from L-cysteine to yield L-alanine, an essential step in sulfur metabolism for biosynthesis of a variety of sulfur-containing biomolecules. Component of the suf operon, which is activated and required under specific conditions such as oxidative stress and iron limitation. Acts as a potent selenocysteine lyase in vitro, that mobilizes selenium from L-selenocysteine. Selenocysteine lyase activity is however unsure in vivo. The sequence is that of Cysteine desulfurase from Serratia proteamaculans (strain 568).